A 668-amino-acid chain; its full sequence is UvrABC system protein C (668 aa).

The region spanning 14 to 91 is the GIY-YIG domain; that stretch reads DSPGCYLHKD…IQRYKPKYNI (78 aa). A UVR domain is found at 196 to 231; sequence KKIVNELEAKMMVSSDNMEFEQAAEYRDVIKAIGTL.

Belongs to the UvrC family. Interacts with UvrB in an incision complex.

Its subcellular location is the cytoplasm. The UvrABC repair system catalyzes the recognition and processing of DNA lesions. UvrC both incises the 5' and 3' sides of the lesion. The N-terminal half is responsible for the 3' incision and the C-terminal half is responsible for the 5' incision. This Lactococcus lactis subsp. lactis (strain IL1403) (Streptococcus lactis) protein is UvrABC system protein C.